The sequence spans 329 residues: MSNSMLDKNKAILTGGGALLLGLIVLFYLAYRPKAEVLQGFLEAREYSVSSKVPGRIEKVFVKKGDHIKKGDLVFSISSPELEAKLAQAEAGHKAAKALSDEVKRGSRDETINSARDVWQAAKSQATLAKETYKRVQDLYDNGVASLQKRDEAYAAYESTKYNESAAYQKYKMALGGASSESKIAAKAKESAALGQVNEVESYLKDVKATAPIDGEVSNVLLSGGELSPKGFPVVLMIDLKDSWLKISVPEKYLNEFKVGKEFEGYIPALKKSTKFRVKYLSVMGDFATWKATNNSNTYDMKSYEVEAIPLEELENFRVGMSVLVTIKP.

Residues 11–31 traverse the membrane as a helical segment; it reads AILTGGGALLLGLIVLFYLAY.

This sequence belongs to the membrane fusion protein (MFP) (TC 8.A.1) family.

Its subcellular location is the membrane. The polypeptide is 36 kDa antigen (Helicobacter pylori (strain ATCC 700392 / 26695) (Campylobacter pylori)).